A 135-amino-acid polypeptide reads, in one-letter code: Large ribosomal subunit protein eL32 (135 aa).

Belongs to the eukaryotic ribosomal protein eL32 family.

The sequence is that of Large ribosomal subunit protein eL32 from Methanococcus maripaludis (strain C7 / ATCC BAA-1331).